The chain runs to 360 residues: Ribosomal RNA large subunit methyltransferase F (360 aa).

A disordered region spans residues 1–36; that stretch reads MSKLISKQGKRPALSQSGLAKPSTSKKSSASKNANT. The segment covering 23-36 has biased composition (low complexity); the sequence is STSKKSSASKNANT.

This sequence belongs to the methyltransferase superfamily. METTL16/RlmF family.

The protein resides in the cytoplasm. It catalyses the reaction adenosine(1618) in 23S rRNA + S-adenosyl-L-methionine = N(6)-methyladenosine(1618) in 23S rRNA + S-adenosyl-L-homocysteine + H(+). In terms of biological role, specifically methylates the adenine in position 1618 of 23S rRNA. This Shewanella denitrificans (strain OS217 / ATCC BAA-1090 / DSM 15013) protein is Ribosomal RNA large subunit methyltransferase F.